A 275-amino-acid polypeptide reads, in one-letter code: Anthracycline biosynthesis protein DnrV (275 aa).

2 consecutive VOC domains span residues 8–136 (APAW…VWRK) and 150–263 (SVGW…VVEL).

It functions in the pathway antibiotic biosynthesis; daunorubicin biosynthesis. Its pathway is antibiotic biosynthesis; carminomycin biosynthesis. Functionally, involved in the biosynthesis of the anthracyclines carminomycin and daunorubicin (daunomycin) which are aromatic polyketide antibiotics that exhibit high cytotoxicity and are widely applied in the chemotherapy of a variety of cancers. In vivo, it acts jointly with DoxA in the conversion of 13-deoxycarminomycin and 13-deoxydaunorubicin to yield carminomycin and daunorubicin, respectively. In vitro, it also acts jointly with DoxA in the C-14 hydroxylation of daunorubicin to form doxorubicin, although this strain is not a doxorubicin producer. The sequence is that of Anthracycline biosynthesis protein DnrV (dnrV) from Streptomyces peucetius.